Here is a 275-residue protein sequence, read N- to C-terminus: Large ribosomal subunit protein uL2 (275 aa).

Disordered stretches follow at residues 28 to 49 and 224 to 246; these read APHA…HGRI and AMNP…NPHP.

The protein belongs to the universal ribosomal protein uL2 family. As to quaternary structure, part of the 50S ribosomal subunit. Forms a bridge to the 30S subunit in the 70S ribosome.

Functionally, one of the primary rRNA binding proteins. Required for association of the 30S and 50S subunits to form the 70S ribosome, for tRNA binding and peptide bond formation. It has been suggested to have peptidyltransferase activity; this is somewhat controversial. Makes several contacts with the 16S rRNA in the 70S ribosome. The protein is Large ribosomal subunit protein uL2 of Stenotrophomonas maltophilia (strain R551-3).